The sequence spans 353 residues: Beta-agarase B (353 aa).

The N-terminal stretch at 1–17 (MYLIYLRLVFCCALLLG) is a signal peptide. Cys-18 carries the N-palmitoyl cysteine lipid modification. Cys-18 is lipidated: S-diacylglycerol cysteine. Residues 30-58 (LPVEQEQEQETEQEGEPEESSEQDLVEEV) are disordered. The span at 32–58 (VEQEQEQETEQEGEPEESSEQDLVEEV) shows a compositional bias: acidic residues. In terms of domain architecture, GH16 spans 58 to 353 (VDWKDIPVPA…WIRIYKPVEK (296 aa)). Substrate contacts are provided by residues 105 to 107 (YHN) and Asp-181. Glu-184 serves as the catalytic Nucleophile. The Proton donor role is filled by Glu-189. Substrate is bound by residues His-215, Arg-219, Asp-224, Gln-226, and Glu-308.

This sequence belongs to the glycosyl hydrolase 16 family. As to quaternary structure, homodimer.

It is found in the cell outer membrane. It carries out the reaction Hydrolysis of (1-&gt;4)-beta-D-galactosidic linkages in agarose, giving the tetramer as the predominant product.. Functionally, cleaves the beta-1,4-linkages between beta-D-galactose and alpha-L-3,6-anhydro-galactose residues in agarose. Cleaves agarose in a random manner with retention of the anomeric-bond configuration, producing beta-anomers that give rise progressively to alpha-anomers when mutarotation takes place. Also tolerant to hybrid substrates containing C6-sulfate groups at the -4, +1, and +3 positions. The chain is Beta-agarase B (agaB) from Zobellia galactanivorans (strain DSM 12802 / CCUG 47099 / CIP 106680 / NCIMB 13871 / Dsij).